The chain runs to 907 residues: Clumping factor B (907 aa).

Positions 1–44 (MKKRIDYLSNKQNKYSIRRFTVGTTSVIVGATILFGIGNHQAQA) are cleaved as a signal peptide. The YSIRK-G/S signaling motif signature appears at 15–26 (YSIRRFTVGTTS). Polar residues-rich tracts occupy residues 44–61 (ASEQ…NASA) and 68–101 (MIET…KPMS). A disordered region spans residues 44 to 191 (ASEQSNDTTQ…AQGTSKPSVR (148 aa)). The ligand binding A region stretch occupies residues 45–542 (SEQSNDTTQS…GSADGDSAVN (498 aa)). Residues 102-119 (TQTSNTTTTEPASTNETP) are compositionally biased toward low complexity. A compositionally biased stretch (polar residues) spans 134–189 (QDQTVPQEANSQVDNKTTNDANSIATNSELKNPQTLDLPQSSPQTISNAQGTSKPS). An MIDAS-like motif motif is present at residues 272 to 276 (DYSNS). Positions 530-879 (YGGGSADGDS…ETGDKSENTN (350 aa)) are disordered. Residues 545–555 (DPTPGPPVDPE) are compositionally biased toward pro residues. The segment covering 556–831 (PSPDPEPEPS…SDSDSDSDSD (276 aa)) has biased composition (acidic residues). The segment covering 835–846 (RVTPPNNEQKAP) has biased composition (polar residues). Basic and acidic residues predominate over residues 863 to 876 (HKTDALPETGDKSE). The LPXTG sorting signal motif lies at 868–872 (LPETG). Thr-871 carries the pentaglycyl murein peptidoglycan amidated threonine modification. Residues 872-907 (GDKSENTNATLFGAMMALLGSLLLFRKRKQDHKEKA) constitute a propeptide, removed by sortase.

This sequence belongs to the serine-aspartate repeat-containing protein (SDr) family. Post-translationally, proteolytically cleaved by aureolysin (aur). This cleavage leads to the inactivation of ClfB.

Its subcellular location is the secreted. The protein localises to the cell wall. In terms of biological role, cell surface-associated protein implicated in virulence by promoting bacterial attachment to both alpha- and beta-chains of human fibrinogen and inducing the formation of bacterial clumps. The chain is Clumping factor B (clfB) from Staphylococcus aureus (strain MW2).